The following is a 153-amino-acid chain: Glucose-6-phosphate 1-dehydrogenase (153 aa).

R21 and K120 together coordinate NADP(+). Residue K120 participates in D-glucose 6-phosphate binding.

The protein belongs to the glucose-6-phosphate dehydrogenase family.

It localises to the cytoplasm. It is found in the cytosol. The enzyme catalyses D-glucose 6-phosphate + NADP(+) = 6-phospho-D-glucono-1,5-lactone + NADPH + H(+). The protein operates within carbohydrate degradation; pentose phosphate pathway; D-ribulose 5-phosphate from D-glucose 6-phosphate (oxidative stage): step 1/3. Functionally, cytosolic glucose-6-phosphate dehydrogenase that catalyzes the first and rate-limiting step of the oxidative branch within the pentose phosphate pathway/shunt, an alternative route to glycolysis for the dissimilation of carbohydrates and a major source of reducing power and metabolic intermediates for fatty acid and nucleic acid biosynthetic processes. This is Glucose-6-phosphate 1-dehydrogenase (ZW) from Hyalophora cecropia (Cecropia moth).